The following is a 154-amino-acid chain: Prefoldin subunit 2 (154 aa).

Residues 124-139 (IRLMGEDEKPAAKENS) are compositionally biased toward basic and acidic residues. Residues 124 to 154 (IRLMGEDEKPAAKENSEGAGAKASSAGVLVS) form a disordered region. The segment covering 140 to 154 (EGAGAKASSAGVLVS) has biased composition (low complexity).

Belongs to the prefoldin subunit beta family. As to quaternary structure, heterohexamer of two PFD-alpha type and four PFD-beta type subunits. Component of the PAQosome complex which is responsible for the biogenesis of several protein complexes and which consists of R2TP complex members RUVBL1, RUVBL2, RPAP3 and PIH1D1, URI complex members PFDN2, PFDN6, PDRG1, UXT and URI1 as well as ASDURF, POLR2E and DNAAF10/WDR92. Interacts with URI1; the interaction is phosphorylation-dependent and occurs in a growth-dependent manner.

It localises to the nucleus. Its subcellular location is the cytoplasm. The protein resides in the mitochondrion. In terms of biological role, binds specifically to cytosolic chaperonin (c-CPN) and transfers target proteins to it. Binds to nascent polypeptide chain and promotes folding in an environment in which there are many competing pathways for nonnative proteins. The polypeptide is Prefoldin subunit 2 (PFDN2) (Homo sapiens (Human)).